Here is a 227-residue protein sequence, read N- to C-terminus: Putative N-acetylmannosamine-6-phosphate 2-epimerase (227 aa).

Belongs to the NanE family.

It carries out the reaction an N-acyl-D-glucosamine 6-phosphate = an N-acyl-D-mannosamine 6-phosphate. It participates in amino-sugar metabolism; N-acetylneuraminate degradation; D-fructose 6-phosphate from N-acetylneuraminate: step 3/5. In terms of biological role, converts N-acetylmannosamine-6-phosphate (ManNAc-6-P) to N-acetylglucosamine-6-phosphate (GlcNAc-6-P). In Shouchella clausii (strain KSM-K16) (Alkalihalobacillus clausii), this protein is Putative N-acetylmannosamine-6-phosphate 2-epimerase.